We begin with the raw amino-acid sequence, 491 residues long: Probable aspartyl aminopeptidase (491 aa).

Histidine 90 contributes to the Zn(2+) binding site. Residue histidine 168 participates in substrate binding. Aspartate 278 contacts Zn(2+). Residue glutamate 315 participates in substrate binding. 2 residues coordinate Zn(2+): glutamate 316 and aspartate 361. The substrate site is built by aspartate 361, histidine 364, lysine 389, and tyrosine 396. Histidine 455 is a Zn(2+) binding site.

This sequence belongs to the peptidase M18 family. Tetrahedron-shaped homododecamer built from six homodimers. The cofactor is Zn(2+).

The protein resides in the cytoplasm. It carries out the reaction Release of an N-terminal aspartate or glutamate from a peptide, with a preference for aspartate.. In terms of biological role, likely to play an important role in intracellular protein and peptide metabolism. The polypeptide is Probable aspartyl aminopeptidase (Ricinus communis (Castor bean)).